The following is a 122-amino-acid chain: Copper metallothionein 1 (122 aa).

The cys-rich copper-binding 1 stretch occupies residues 1-35; sequence MACNCPPQKNTACCSTSEAQDKCTCQKGNCECKAC. The tract at residues 36–50 is spacer B1; sequence PNSTKTSESGGKAST. Residues 51–72 are cys-rich copper-binding 2; that stretch reads CNCGGSGEACTCPPGQCACDKC. Residues 73–81 form a spacer B2 region; the sequence is PKKAKSVST. A cys-rich copper-binding 3 region spans residues 82–103; it reads CGCGGSGAACSCPPGKCACDNC. A spacer B3 region spans residues 104-113; the sequence is PKQAQEKVSS. The segment at 114 to 122 is cys-rich copper-binding 4; sequence CACSGSGAA.

It belongs to the metallothionein superfamily.

It localises to the cytoplasm. Its subcellular location is the cell cortex. Copper metallothionein that protects the cell against copper toxicity by tightly chelating copper ions. Required for antioxidant-mediated growth rescue in the presence of fluconazole. Acts as a critical factors for lung colonization and virulence. The polypeptide is Copper metallothionein 1 (Cryptococcus neoformans var. grubii serotype A (strain H99 / ATCC 208821 / CBS 10515 / FGSC 9487) (Filobasidiella neoformans var. grubii)).